The sequence spans 424 residues: UPF0229 protein Ping_2705 (424 aa).

The interval 77-108 (PGNQDFIGGDRIERPPSGGAGGSGSGASDSGK) is disordered.

Belongs to the UPF0229 family.

In Psychromonas ingrahamii (strain DSM 17664 / CCUG 51855 / 37), this protein is UPF0229 protein Ping_2705.